The sequence spans 435 residues: Monodehydroascorbate reductase 2 (435 aa).

Residues 14 to 17, glutamate 41, arginine 48, lysine 53, isoleucine 96, and 147 to 148 each bind FAD; these read GGVA and RE. Residues 172-178, glutamate 196, arginine 202, and glycine 261 contribute to the NAD(+) site; that span reads GGYIGLE. 174–178 lines the NADP(+) pocket; sequence YIGLE. Arginine 202 and glycine 261 together coordinate NADP(+). Residue aspartate 298 participates in FAD binding. 314–315 contacts NAD(+); sequence EH. 314–315 serves as a coordination point for NADP(+); sequence EH. Residue valine 316 coordinates FAD. Residue arginine 320 participates in L-ascorbate binding. Tyrosine 349 serves as a coordination point for FAD. Tyrosine 349 provides a ligand contact to NAD(+). Tyrosine 349 serves as a coordination point for NADP(+). Arginine 351 lines the L-ascorbate pocket. Serine 417 bears the Phosphoserine mark.

This sequence belongs to the FAD-dependent oxidoreductase family. Requires FAD as cofactor.

It is found in the cytoplasm. It catalyses the reaction 2 monodehydro-L-ascorbate radical + NADH + H(+) = 2 L-ascorbate + NAD(+). In terms of biological role, catalyzes the conversion of monodehydroascorbate to ascorbate, oxidizing NADH in the process. This is Monodehydroascorbate reductase 2 from Arabidopsis thaliana (Mouse-ear cress).